The following is a 431-amino-acid chain: UDP-N-acetylglucosamine 1-carboxyvinyltransferase (431 aa).

A phosphoenolpyruvate-binding site is contributed by 22–23; it reads KN. Arg-102 is a binding site for UDP-N-acetyl-alpha-D-glucosamine. The active-site Proton donor is Cys-126. Position 126 is a 2-(S-cysteinyl)pyruvic acid O-phosphothioketal (Cys-126). UDP-N-acetyl-alpha-D-glucosamine contacts are provided by Asp-318 and Ile-340.

This sequence belongs to the EPSP synthase family. MurA subfamily.

It is found in the cytoplasm. It carries out the reaction phosphoenolpyruvate + UDP-N-acetyl-alpha-D-glucosamine = UDP-N-acetyl-3-O-(1-carboxyvinyl)-alpha-D-glucosamine + phosphate. Its pathway is cell wall biogenesis; peptidoglycan biosynthesis. Functionally, cell wall formation. Adds enolpyruvyl to UDP-N-acetylglucosamine. This Bartonella quintana (strain Toulouse) (Rochalimaea quintana) protein is UDP-N-acetylglucosamine 1-carboxyvinyltransferase.